Here is a 159-residue protein sequence, read N- to C-terminus: Transcriptional repressor NrdR (159 aa).

The segment at 3–34 (CPFCGSDNTSVKDSRAAEDDTAVRRRRVCESC) is a zinc-finger region. Positions 49 to 139 (IIVVKRDGKR…VYRDFKDPSD (91 aa)) constitute an ATP-cone domain.

This sequence belongs to the NrdR family. Zn(2+) is required as a cofactor.

Negatively regulates transcription of bacterial ribonucleotide reductase nrd genes and operons by binding to NrdR-boxes. This chain is Transcriptional repressor NrdR, found in Hyphomonas neptunium (strain ATCC 15444).